Reading from the N-terminus, the 186-residue chain is Elongation factor P (186 aa).

This sequence belongs to the elongation factor P family.

Its subcellular location is the cytoplasm. It functions in the pathway protein biosynthesis; polypeptide chain elongation. In terms of biological role, involved in peptide bond synthesis. Stimulates efficient translation and peptide-bond synthesis on native or reconstituted 70S ribosomes in vitro. Probably functions indirectly by altering the affinity of the ribosome for aminoacyl-tRNA, thus increasing their reactivity as acceptors for peptidyl transferase. This chain is Elongation factor P, found in Laribacter hongkongensis (strain HLHK9).